A 177-amino-acid polypeptide reads, in one-letter code: ATP synthase subunit delta (177 aa).

This sequence belongs to the ATPase delta chain family. F-type ATPases have 2 components, F(1) - the catalytic core - and F(0) - the membrane proton channel. F(1) has five subunits: alpha(3), beta(3), gamma(1), delta(1), epsilon(1). F(0) has three main subunits: a(1), b(2) and c(10-14). The alpha and beta chains form an alternating ring which encloses part of the gamma chain. F(1) is attached to F(0) by a central stalk formed by the gamma and epsilon chains, while a peripheral stalk is formed by the delta and b chains.

The protein localises to the cell inner membrane. In terms of biological role, f(1)F(0) ATP synthase produces ATP from ADP in the presence of a proton or sodium gradient. F-type ATPases consist of two structural domains, F(1) containing the extramembraneous catalytic core and F(0) containing the membrane proton channel, linked together by a central stalk and a peripheral stalk. During catalysis, ATP synthesis in the catalytic domain of F(1) is coupled via a rotary mechanism of the central stalk subunits to proton translocation. This protein is part of the stalk that links CF(0) to CF(1). It either transmits conformational changes from CF(0) to CF(1) or is implicated in proton conduction. The polypeptide is ATP synthase subunit delta (Shewanella loihica (strain ATCC BAA-1088 / PV-4)).